The primary structure comprises 658 residues: Structure-specific endonuclease subunit SLX4 (658 aa).

Disordered regions lie at residues 17–37, 74–123, and 327–383; these read VDSDSPMQEQDELPMTQIPGD, GATE…KSIT, and QPGV…QVLQ. 2 stretches are compositionally biased toward low complexity: residues 75–90 and 99–108; these read ATESAPPSRAATPPAK and KAAGRTSTGT. Over residues 365-374 the composition is skewed to polar residues; that stretch reads FPKSPTSTPE.

Belongs to the SLX4 family. As to quaternary structure, forms a heterodimer with SLX1. Phosphorylated in response to DNA damage.

The protein localises to the nucleus. Regulatory subunit of the SLX1-SLX4 structure-specific endonuclease that resolves DNA secondary structures generated during DNA repair and recombination. Has endonuclease activity towards branched DNA substrates, introducing single-strand cuts in duplex DNA close to junctions with ss-DNA. This Lachancea thermotolerans (strain ATCC 56472 / CBS 6340 / NRRL Y-8284) (Yeast) protein is Structure-specific endonuclease subunit SLX4.